A 296-amino-acid chain; its full sequence is GTPase Era (296 aa).

One can recognise an Era-type G domain in the interval 7–174; it reads KCSMSAIVGA…VDYLCETSPY (168 aa). The interval 15–22 is G1; sequence GATNAGKS. 15–22 serves as a coordination point for GTP; sequence GATNAGKS. The G2 stretch occupies residues 41–45; it reads QTTRV. Residues 62–65 are G3; it reads DTPG. Residues 62–66 and 124–127 contribute to the GTP site; these read DTPGI and NKID. The G4 stretch occupies residues 124–127; the sequence is NKID. Residues 153–155 form a G5 region; sequence ISA. In terms of domain architecture, KH type-2 spans 205–282; sequence LRHELPYSLS…HLFLFVKVRE (78 aa).

It belongs to the TRAFAC class TrmE-Era-EngA-EngB-Septin-like GTPase superfamily. Era GTPase family. In terms of assembly, monomer.

The protein localises to the cytoplasm. The protein resides in the cell inner membrane. Functionally, an essential GTPase that binds both GDP and GTP, with rapid nucleotide exchange. Plays a role in 16S rRNA processing and 30S ribosomal subunit biogenesis and possibly also in cell cycle regulation and energy metabolism. In Ehrlichia ruminantium (strain Welgevonden), this protein is GTPase Era.